Here is a 400-residue protein sequence, read N- to C-terminus: Mu-type opioid receptor (400 aa).

Over 1-68 the chain is Extracellular; it reads MDSSAAPTNA…CPPTGSPSMI (68 aa). Asn-9, Asn-12, Asn-33, Asn-40, and Asn-48 each carry an N-linked (GlcNAc...) asparagine glycan. The chain crosses the membrane as a helical span at residues 69 to 93; it reads TAITIMALYSIVCVVGLFGNFLVMY. The Cytoplasmic portion of the chain corresponds to 94 to 106; sequence VIVRYTKMKTATN. A helical transmembrane segment spans residues 107-131; that stretch reads IYIFNLALADALATSTLPFQSVNYL. The Extracellular segment spans residues 132 to 142; sequence MGTWPFGTILC. Cys-142 and Cys-219 form a disulfide bridge. A helical membrane pass occupies residues 143 to 165; it reads KIVISIDYYNMFTSIFTLCTMSV. The Cytoplasmic segment spans residues 166-185; sequence DRYIAVCHPVKALDFRTPRN. Tyr-168 bears the Phosphotyrosine mark. Residues 186–207 traverse the membrane as a helical segment; sequence AKIINVCNWILSSAIGLPVMFM. Over 208 to 230 the chain is Extracellular; it reads ATTKYRQGSIDCTLTFSHPTWYW. The helical transmembrane segment at 231-255 threads the bilayer; the sequence is ENLLKICVFIFAFIMPVLIITVCYG. Over 256 to 279 the chain is Cytoplasmic; it reads LMILRLKSVRMLSGSKEKDRNLRR. The helical transmembrane segment at 280–306 threads the bilayer; that stretch reads ITRMVLVVVAVFIVCWTPIHIYVIIKA. Residues 307–314 lie on the Extracellular side of the membrane; that stretch reads LVTIPETT. A helical transmembrane segment spans residues 315-338; that stretch reads FQTVSWHFCIALGYTNSCLNPVLY. An NPxxY; plays a role in stabilizing the activated conformation of the receptor motif is present at residues 334 to 338; the sequence is NPVLY. Residues 339–400 lie on the Cytoplasmic side of the membrane; it reads AFLDENFKRC…NLEAETAPLP (62 aa). The S-palmitoyl cysteine moiety is linked to residue Cys-353. Residue Ser-365 is modified to Phosphoserine. Position 372 is a phosphothreonine (Thr-372). Phosphoserine is present on Ser-377. Phosphothreonine is present on Thr-396.

Belongs to the G-protein coupled receptor 1 family. As to quaternary structure, forms homooligomers and heterooligomers with other GPCRs, such as OPRD1, OPRK1, OPRL1, NPFFR2, ADRA2A, SSTR2, CNR1 and CCR5 (probably in dimeric forms). Interacts with heterotrimeric G proteins; interaction with a heterotrimeric complex containing GNAI1, GNB1 and GNG2 stabilizes the active conformation of the receptor and increases its affinity for endomorphin-2, the synthetic opioid peptide DAMGO and for morphinan agonists. Interacts with PPL; the interaction disrupts agonist-mediated G-protein activation. Interacts (via C-terminus) with DNAJB4 (via C-terminus). Interacts with calmodulin; the interaction inhibits the constitutive activity of OPRM1; it abolishes basal and attenuates agonist-stimulated G-protein coupling. Interacts with FLNA, PLD2, RANBP9 and WLS and GPM6A. Interacts with RTP4. Interacts with SYP and GNAS. Interacts with RGS9, RGS17, RGS20, RGS4, PPP1R9B and HINT1. Post-translationally, phosphorylated. Differentially phosphorylated in basal and agonist-induced conditions. Agonist-mediated phosphorylation modulates receptor internalization. Phosphorylated by GRK2 in a agonist-dependent manner. Phosphorylation at Tyr-168 requires receptor activation, is dependent on non-receptor protein tyrosine kinase Src and results in a decrease in agonist efficacy by reducing G-protein coupling efficiency. Phosphorylated on tyrosine residues; the phosphorylation is involved in agonist-induced G-protein-independent receptor down-regulation. Phosphorylation at Ser-377 is involved in G-protein-dependent but not beta-arrestin-dependent activation of the ERK pathway. Ubiquitinated. A basal ubiquitination seems not to be related to degradation. Ubiquitination is increased upon formation of OPRM1:OPRD1 oligomers leading to proteasomal degradation; the ubiquitination is diminished by RTP4. In terms of tissue distribution, expressed in brain. Isoform 16 and isoform 17 are detected in brain.

It localises to the cell membrane. It is found in the cell projection. Its subcellular location is the axon. The protein resides in the perikaryon. The protein localises to the dendrite. It localises to the endosome. It is found in the cytoplasm. Functionally, receptor for endogenous opioids such as beta-endorphin and endomorphin. Receptor for natural and synthetic opioids including morphine, heroin, DAMGO, fentanyl, etorphine, buprenorphin and methadone. Also activated by enkephalin peptides, such as Met-enkephalin or Met-enkephalin-Arg-Phe, with higher affinity for Met-enkephalin-Arg-Phe. Agonist binding to the receptor induces coupling to an inactive GDP-bound heterotrimeric G-protein complex and subsequent exchange of GDP for GTP in the G-protein alpha subunit leading to dissociation of the G-protein complex with the free GTP-bound G-protein alpha and the G-protein beta-gamma dimer activating downstream cellular effectors. The agonist- and cell type-specific activity is predominantly coupled to pertussis toxin-sensitive G(i) and G(o) G alpha proteins, GNAI1, GNAI2, GNAI3 and GNAO1 isoforms Alpha-1 and Alpha-2, and to a lesser extent to pertussis toxin-insensitive G alpha proteins GNAZ and GNA15. They mediate an array of downstream cellular responses, including inhibition of adenylate cyclase activity and both N-type and L-type calcium channels, activation of inward rectifying potassium channels, mitogen-activated protein kinase (MAPK), phospholipase C (PLC), phosphoinositide/protein kinase (PKC), phosphoinositide 3-kinase (PI3K) and regulation of NF-kappa-B. Also couples to adenylate cyclase stimulatory G alpha proteins. The selective temporal coupling to G-proteins and subsequent signaling can be regulated by RGSZ proteins, such as RGS9, RGS17 and RGS4. Phosphorylation by members of the GPRK subfamily of Ser/Thr protein kinases and association with beta-arrestins is involved in short-term receptor desensitization. Beta-arrestins associate with the GPRK-phosphorylated receptor and uncouple it from the G-protein thus terminating signal transduction. The phosphorylated receptor is internalized through endocytosis via clathrin-coated pits which involves beta-arrestins. The activation of the ERK pathway occurs either in a G-protein-dependent or a beta-arrestin-dependent manner and is regulated by agonist-specific receptor phosphorylation. Acts as a class A G-protein coupled receptor (GPCR) which dissociates from beta-arrestin at or near the plasma membrane and undergoes rapid recycling. Receptor down-regulation pathways are varying with the agonist and occur dependent or independent of G-protein coupling. Endogenous ligands induce rapid desensitization, endocytosis and recycling. Heterooligomerization with other GPCRs can modulate agonist binding, signaling and trafficking properties. Couples to GNAS and is proposed to be involved in excitatory effects. In terms of biological role, does not bind agonists but may act through oligomerization with binding-competent OPRM1 isoforms and reduce their ligand binding activity. The polypeptide is Mu-type opioid receptor (OPRM1) (Homo sapiens (Human)).